The following is a 504-amino-acid chain: Maturase K (504 aa).

This sequence belongs to the intron maturase 2 family. MatK subfamily.

The protein resides in the plastid. Its subcellular location is the chloroplast. Usually encoded in the trnK tRNA gene intron. Probably assists in splicing its own and other chloroplast group II introns. This Vigna mungo (Black gram) protein is Maturase K.